Here is a 315-residue protein sequence, read N- to C-terminus: Methionyl-tRNA formyltransferase (315 aa).

113 to 116 (SILP) is a binding site for (6S)-5,6,7,8-tetrahydrofolate.

Belongs to the Fmt family.

It catalyses the reaction L-methionyl-tRNA(fMet) + (6R)-10-formyltetrahydrofolate = N-formyl-L-methionyl-tRNA(fMet) + (6S)-5,6,7,8-tetrahydrofolate + H(+). Its function is as follows. Attaches a formyl group to the free amino group of methionyl-tRNA(fMet). The formyl group appears to play a dual role in the initiator identity of N-formylmethionyl-tRNA by promoting its recognition by IF2 and preventing the misappropriation of this tRNA by the elongation apparatus. The protein is Methionyl-tRNA formyltransferase of Aliivibrio fischeri (strain MJ11) (Vibrio fischeri).